Consider the following 190-residue polypeptide: MVRVSTSEFRVGLRVKIDGQPYVILQNDFVKPGKGQAFNRIKVKNFLTGRVIEKTFKSGESIETADVREQQMRLLYTDQEGATFMDDETFEQELIFWDKLENVRQWLLEDTIYTLVLYNGDVISVEPPIFMELTIAETAPGVRGDTASGRVLKPATTNTGAKIMVPIFIEEGEVVKVDTRTGSYESRVSK.

Belongs to the elongation factor P family.

Its subcellular location is the cytoplasm. The protein operates within protein biosynthesis; polypeptide chain elongation. Involved in peptide bond synthesis. Stimulates efficient translation and peptide-bond synthesis on native or reconstituted 70S ribosomes in vitro. Probably functions indirectly by altering the affinity of the ribosome for aminoacyl-tRNA, thus increasing their reactivity as acceptors for peptidyl transferase. The sequence is that of Elongation factor P 2 (efp2) from Chlamydia trachomatis serovar D (strain ATCC VR-885 / DSM 19411 / UW-3/Cx).